A 504-amino-acid chain; its full sequence is D-alanine--D-alanyl carrier protein ligase (504 aa).

152 to 153 (TS) is a binding site for ATP. A D-alanine-binding site is contributed by Asp-197. 292-297 (NTYGPT) serves as a coordination point for ATP. Val-301 provides a ligand contact to D-alanine. Residues Asp-383, 394-397 (YNGR), and Lys-492 each bind ATP. D-alanine is bound at residue Lys-492.

Belongs to the ATP-dependent AMP-binding enzyme family. DltA subfamily.

Its subcellular location is the cytoplasm. The catalysed reaction is holo-[D-alanyl-carrier protein] + D-alanine + ATP = D-alanyl-[D-alanyl-carrier protein] + AMP + diphosphate. It functions in the pathway cell wall biogenesis; lipoteichoic acid biosynthesis. In terms of biological role, catalyzes the first step in the D-alanylation of lipoteichoic acid (LTA), the activation of D-alanine and its transfer onto the D-alanyl carrier protein (Dcp) DltC. In an ATP-dependent two-step reaction, forms a high energy D-alanyl-AMP intermediate, followed by transfer of the D-alanyl residue as a thiol ester to the phosphopantheinyl prosthetic group of the Dcp. D-alanylation of LTA plays an important role in modulating the properties of the cell wall in Gram-positive bacteria, influencing the net charge of the cell wall. The chain is D-alanine--D-alanyl carrier protein ligase from Bacillus thuringiensis (strain Al Hakam).